The following is a 622-amino-acid chain: DNA-directed RNA polymerase subunit gamma (622 aa).

The Zn(2+) site is built by cysteine 70, cysteine 72, cysteine 85, and cysteine 88. Mg(2+) is bound by residues aspartate 466, aspartate 468, and aspartate 470.

The protein belongs to the RNA polymerase beta' chain family. RpoC1 subfamily. As to quaternary structure, in cyanobacteria the RNAP catalytic core is composed of 2 alpha, 1 beta, 1 beta', 1 gamma and 1 omega subunit. When a sigma factor is associated with the core the holoenzyme is formed, which can initiate transcription. Mg(2+) serves as cofactor. Zn(2+) is required as a cofactor.

It carries out the reaction RNA(n) + a ribonucleoside 5'-triphosphate = RNA(n+1) + diphosphate. Its function is as follows. DNA-dependent RNA polymerase catalyzes the transcription of DNA into RNA using the four ribonucleoside triphosphates as substrates. In Thermosynechococcus vestitus (strain NIES-2133 / IAM M-273 / BP-1), this protein is DNA-directed RNA polymerase subunit gamma.